The following is a 671-amino-acid chain: Putative glycoside hydrolase BT_3595 (671 aa).

Positions 1–24 (MITGIISILCYLQCFGTLSASVTA) are cleaved as a signal peptide.

Belongs to the glycoside hydrolase-like 3 (GHL3) family.

This Bacteroides thetaiotaomicron (strain ATCC 29148 / DSM 2079 / JCM 5827 / CCUG 10774 / NCTC 10582 / VPI-5482 / E50) protein is Putative glycoside hydrolase BT_3595.